Reading from the N-terminus, the 172-residue chain is Outer-membrane lipoprotein carrier protein (172 aa).

Residues 1-16 (MRIALLWVAFGALALA) form the signal peptide.

This sequence belongs to the LolA family. In terms of assembly, monomer.

The protein localises to the periplasm. Its function is as follows. Participates in the translocation of lipoproteins from the inner membrane to the outer membrane. Only forms a complex with a lipoprotein if the residue after the N-terminal Cys is not an aspartate (The Asp acts as a targeting signal to indicate that the lipoprotein should stay in the inner membrane). This is Outer-membrane lipoprotein carrier protein from Wolinella succinogenes (strain ATCC 29543 / DSM 1740 / CCUG 13145 / JCM 31913 / LMG 7466 / NCTC 11488 / FDC 602W) (Vibrio succinogenes).